A 754-amino-acid chain; its full sequence is Deadenylation-dependent mRNA-decapping factor pdc2 (754 aa).

Residues 499–754 (LESIWKALYI…MGLDARQLSA (256 aa)) form an interaction with lsm1 region.

Belongs to the PAT1 family. Interacts with dcp2. Interacts with lsm1; via C-terminus.

The protein localises to the cytoplasm. The protein resides in the nucleus. It localises to the P-body. Functionally, activator of decapping that functions as a general and active mechanism of translational repression and required for P-body formation. Stabilizes the 3' terminus of mRNAs and modulates the rates of mRNA-decapping that occur following deadenylation. Might be required for promoting the formation or the stabilization of the preinitiation translation complexes. Necessary for accurate chromosome transmission during cell division. Together with lsm1, recruits the deadenylase ccr4 to P-bodies. The protein is Deadenylation-dependent mRNA-decapping factor pdc2 of Schizosaccharomyces pombe (strain 972 / ATCC 24843) (Fission yeast).